A 269-amino-acid polypeptide reads, in one-letter code: 4-hydroxy-tetrahydrodipicolinate reductase (269 aa).

Residues 10-15, E36, 99-101, and 123-126 each bind NAD(+); these read GANGRM, GTT, and AANF. H156 acts as the Proton donor/acceptor in catalysis. Position 157 (H157) interacts with (S)-2,3,4,5-tetrahydrodipicolinate. K160 functions as the Proton donor in the catalytic mechanism. (S)-2,3,4,5-tetrahydrodipicolinate is bound at residue 166-167; that stretch reads GT.

The protein belongs to the DapB family.

The protein resides in the cytoplasm. It carries out the reaction (S)-2,3,4,5-tetrahydrodipicolinate + NAD(+) + H2O = (2S,4S)-4-hydroxy-2,3,4,5-tetrahydrodipicolinate + NADH + H(+). The catalysed reaction is (S)-2,3,4,5-tetrahydrodipicolinate + NADP(+) + H2O = (2S,4S)-4-hydroxy-2,3,4,5-tetrahydrodipicolinate + NADPH + H(+). It participates in amino-acid biosynthesis; L-lysine biosynthesis via DAP pathway; (S)-tetrahydrodipicolinate from L-aspartate: step 4/4. In terms of biological role, catalyzes the conversion of 4-hydroxy-tetrahydrodipicolinate (HTPA) to tetrahydrodipicolinate. This chain is 4-hydroxy-tetrahydrodipicolinate reductase, found in Neisseria gonorrhoeae (strain ATCC 700825 / FA 1090).